A 229-amino-acid chain; its full sequence is Large ribosomal subunit protein uL1 (229 aa).

The protein belongs to the universal ribosomal protein uL1 family. Part of the 50S ribosomal subunit.

Binds directly to 23S rRNA. The L1 stalk is quite mobile in the ribosome, and is involved in E site tRNA release. In terms of biological role, protein L1 is also a translational repressor protein, it controls the translation of the L11 operon by binding to its mRNA. The polypeptide is Large ribosomal subunit protein uL1 (Flavobacterium psychrophilum (strain ATCC 49511 / DSM 21280 / CIP 103535 / JIP02/86)).